The following is a 292-amino-acid chain: Phosphatidylserine decarboxylase proenzyme (292 aa).

Active-site charge relay system; for autoendoproteolytic cleavage activity residues include D92, H149, and S256. S256 functions as the Schiff-base intermediate with substrate; via pyruvic acid; for decarboxylase activity in the catalytic mechanism. At S256 the chain carries Pyruvic acid (Ser); by autocatalysis.

Belongs to the phosphatidylserine decarboxylase family. PSD-B subfamily. Prokaryotic type I sub-subfamily. Heterodimer of a large membrane-associated beta subunit and a small pyruvoyl-containing alpha subunit. Requires pyruvate as cofactor. Post-translationally, is synthesized initially as an inactive proenzyme. Formation of the active enzyme involves a self-maturation process in which the active site pyruvoyl group is generated from an internal serine residue via an autocatalytic post-translational modification. Two non-identical subunits are generated from the proenzyme in this reaction, and the pyruvate is formed at the N-terminus of the alpha chain, which is derived from the carboxyl end of the proenzyme. The autoendoproteolytic cleavage occurs by a canonical serine protease mechanism, in which the side chain hydroxyl group of the serine supplies its oxygen atom to form the C-terminus of the beta chain, while the remainder of the serine residue undergoes an oxidative deamination to produce ammonia and the pyruvoyl prosthetic group on the alpha chain. During this reaction, the Ser that is part of the protease active site of the proenzyme becomes the pyruvoyl prosthetic group, which constitutes an essential element of the active site of the mature decarboxylase.

It localises to the cell membrane. The catalysed reaction is a 1,2-diacyl-sn-glycero-3-phospho-L-serine + H(+) = a 1,2-diacyl-sn-glycero-3-phosphoethanolamine + CO2. The protein operates within phospholipid metabolism; phosphatidylethanolamine biosynthesis; phosphatidylethanolamine from CDP-diacylglycerol: step 2/2. Its function is as follows. Catalyzes the formation of phosphatidylethanolamine (PtdEtn) from phosphatidylserine (PtdSer). The chain is Phosphatidylserine decarboxylase proenzyme from Baumannia cicadellinicola subsp. Homalodisca coagulata.